The primary structure comprises 251 residues: Probable transcriptional regulatory protein Cgl1663/cg1872 (251 aa).

Positions 1 to 22 (MSGHSKWATTKHKKAANDAKRG) are disordered.

The protein belongs to the TACO1 family.

Its subcellular location is the cytoplasm. This Corynebacterium glutamicum (strain ATCC 13032 / DSM 20300 / JCM 1318 / BCRC 11384 / CCUG 27702 / LMG 3730 / NBRC 12168 / NCIMB 10025 / NRRL B-2784 / 534) protein is Probable transcriptional regulatory protein Cgl1663/cg1872.